A 125-amino-acid polypeptide reads, in one-letter code: MPLLRSKKNTGRDAEKRAAKWLTGQGLSIVERNFHCRQGEIDLILLDQETLVFTEVRWRKHQSYGGALASVDQHKQRRLINAAQHFLARHPEHHHRPCRFDVLGMEPDSQQAVLYQWIQNAFYSE.

This sequence belongs to the UPF0102 family.

The polypeptide is UPF0102 protein ABO_0585 (Alcanivorax borkumensis (strain ATCC 700651 / DSM 11573 / NCIMB 13689 / SK2)).